The primary structure comprises 611 residues: Dihydroxy-acid dehydratase (611 aa).

Mg(2+) is bound at residue Asp81. Position 122 (Cys122) interacts with [2Fe-2S] cluster. 2 residues coordinate Mg(2+): Asp123 and Lys124. N6-carboxylysine is present on Lys124. Cys195 lines the [2Fe-2S] cluster pocket. Glu491 contacts Mg(2+). Ser517 functions as the Proton acceptor in the catalytic mechanism.

It belongs to the IlvD/Edd family. As to quaternary structure, homodimer. [2Fe-2S] cluster serves as cofactor. Mg(2+) is required as a cofactor.

It carries out the reaction (2R)-2,3-dihydroxy-3-methylbutanoate = 3-methyl-2-oxobutanoate + H2O. The catalysed reaction is (2R,3R)-2,3-dihydroxy-3-methylpentanoate = (S)-3-methyl-2-oxopentanoate + H2O. It participates in amino-acid biosynthesis; L-isoleucine biosynthesis; L-isoleucine from 2-oxobutanoate: step 3/4. It functions in the pathway amino-acid biosynthesis; L-valine biosynthesis; L-valine from pyruvate: step 3/4. Functionally, functions in the biosynthesis of branched-chain amino acids. Catalyzes the dehydration of (2R,3R)-2,3-dihydroxy-3-methylpentanoate (2,3-dihydroxy-3-methylvalerate) into 2-oxo-3-methylpentanoate (2-oxo-3-methylvalerate) and of (2R)-2,3-dihydroxy-3-methylbutanoate (2,3-dihydroxyisovalerate) into 2-oxo-3-methylbutanoate (2-oxoisovalerate), the penultimate precursor to L-isoleucine and L-valine, respectively. This chain is Dihydroxy-acid dehydratase, found in Brucella canis (strain ATCC 23365 / NCTC 10854 / RM-666).